We begin with the raw amino-acid sequence, 327 residues long: T-cell surface glycoprotein CD1a (327 aa).

The first 16 residues, M1–G16, serve as a signal peptide directing secretion. Residues N17–V300 lie on the Extracellular side of the membrane. 3 N-linked (GlcNAc...) asparagine glycosylation sites follow: N37, N60, and N74. Residue R90 to S94 participates in a D-galactosylceramide binding. Intrachain disulfides connect C119-C183 and C223-C278. N145 carries N-linked (GlcNAc...) asparagine glycosylation. Positions 171 and 175 each coordinate a D-galactosylceramide. In terms of domain architecture, Ig-like spans P184 to V291. The helical transmembrane segment at G301–F321 threads the bilayer. Residues R322–C327 are Cytoplasmic-facing.

Heterodimer with B2M (beta-2-microglobulin). Interacts with CD74. As to expression, expressed on cortical thymocytes, epidermal Langerhans cells, dendritic cells, on certain T-cell leukemias, and in various other tissues.

Its subcellular location is the cell membrane. The protein localises to the membrane raft. It is found in the endosome membrane. Functionally, antigen-presenting protein that binds self and non-self lipid and glycolipid antigens and presents them to T-cell receptors on natural killer T-cells. This Homo sapiens (Human) protein is T-cell surface glycoprotein CD1a (CD1A).